A 761-amino-acid chain; its full sequence is Protein spire homolog 1 (761 aa).

Disordered regions lie at residues 1–23 (MTDG…ARPE) and 160–183 (DCPD…AEVS). The region spanning 36–223 (LCLEEILTLY…RALYAETKEL (188 aa)) is the KIND domain. Over residues 160–180 (DCPDEGYEATEEEDEGEEENA) the composition is skewed to acidic residues. The stretch at 218 to 246 (AETKELRTFLEKIKSAKENLRKMEGETEE) forms a coiled coil. 2 WH2 domains span residues 295-313 (PYEM…LRKV) and 359-376 (LHER…LRPV). 2 disordered regions span residues 375 to 406 (PVSP…DIPD) and 419 to 539 (ANGT…KSLA). The span at 469 to 480 (SSSSISTSLVED) shows a compositional bias: low complexity. Positions 504–520 (PDKRIAPQRRHSIEKEA) are enriched in basic and acidic residues. The tract at residues 557–577 (LTLTVEEVMHIRQVLVKAELE) is spir-box. 2 disordered regions span residues 630 to 694 (PSKP…DELE) and 728 to 761 (STKR…IKEV). Positions 636–647 (SLPISSLGPSIL) are enriched in low complexity. A compositionally biased stretch (basic and acidic residues) spans 682–693 (KHGDRSSSKDEL). The span at 728–739 (STKRARLHRRTH) shows a compositional bias: basic residues. Residues 740-749 (SVYSSSTSSS) are compositionally biased toward low complexity.

Belongs to the spire family.

It localises to the cytoplasm. The protein localises to the cytoskeleton. Its subcellular location is the cytosol. It is found in the cleavage furrow. The protein resides in the perinuclear region. It localises to the cell membrane. The protein localises to the cytoplasmic vesicle membrane. Functionally, acts as an actin nucleation factor, remains associated with the slow-growing pointed end of the new filament. Involved in intracellular vesicle transport along actin fibers, providing a novel link between actin cytoskeleton dynamics and intracellular transport. Required for asymmetric spindle positioning and asymmetric cell division during meiosis. Required for normal formation of the cleavage furrow and for polar body extrusion during female germ cell meiosis. Also acts in the nucleus: together with FMN2, promotes assembly of nuclear actin filaments in response to DNA damage in order to facilitate movement of chromatin and repair factors after DNA damage. In addition, promotes innate immune signaling downstream of dsRNA sensing. Mechanistically, contributes to IRF3 phosphorylation and activation downstream of MAVS and upstream of TBK1. In Danio rerio (Zebrafish), this protein is Protein spire homolog 1.